The sequence spans 423 residues: Glucose-1-phosphate adenylyltransferase (423 aa).

Alpha-D-glucose 1-phosphate is bound by residues Tyr108, Gly173, 188–189, and Ser207; that span reads EK.

It belongs to the bacterial/plant glucose-1-phosphate adenylyltransferase family. As to quaternary structure, homotetramer.

The enzyme catalyses alpha-D-glucose 1-phosphate + ATP + H(+) = ADP-alpha-D-glucose + diphosphate. The protein operates within glycan biosynthesis; glycogen biosynthesis. Involved in the biosynthesis of ADP-glucose, a building block required for the elongation reactions to produce glycogen. Catalyzes the reaction between ATP and alpha-D-glucose 1-phosphate (G1P) to produce pyrophosphate and ADP-Glc. The chain is Glucose-1-phosphate adenylyltransferase from Francisella tularensis subsp. novicida (strain U112).